Consider the following 309-residue polypeptide: NADH-cytochrome b5 reductase 1 (309 aa).

Residues 31 to 51 (DWVVYSVALALALGTWKFFQL) form a helical membrane-spanning segment. The 109-residue stretch at 60-168 (TKFQEFELKE…RGPKGAFVYQ (109 aa)) folds into the FAD-binding FR-type domain. FAD-binding positions include 148–163 (AGLSVGQSIRVRGPKG) and 174–208 (HFGMIAGGTGITPMLQVVRAIVRGRAAGDTTQVDL).

The protein belongs to the flavoprotein pyridine nucleotide cytochrome reductase family. As to quaternary structure, monomer. Component of the 2-(3-amino-3-carboxypropyl)histidine synthase complex composed of DPH1, DPH2, DPH3 and a NADH-dependent reductase, predominantly CBR1. Requires FAD as cofactor.

The protein localises to the mitochondrion outer membrane. The enzyme catalyses 2 Fe(III)-[cytochrome b5] + NADH = 2 Fe(II)-[cytochrome b5] + NAD(+) + H(+). The catalysed reaction is 2 Fe(3+)-[Dph3] + NADH = 2 Fe(2+)-[Dph3] + NAD(+) + H(+). It participates in protein modification; peptidyl-diphthamide biosynthesis. In terms of biological role, NADH-dependent reductase for DPH3 and cytochrome b5. Required for the first step of diphthamide biosynthesis, a post-translational modification of histidine which occurs in elongation factor 2. DPH1 and DPH2 transfer a 3-amino-3-carboxypropyl (ACP) group from S-adenosyl-L-methionine (SAM) to a histidine residue, the reaction is assisted by a reduction system comprising DPH3 and a NADH-dependent reductase, predominantly CBR1. By reducing DPH3, also involved in the formation of the tRNA wobble base modification mcm5s 2U (5-methoxycarbonylmethyl-2-thiouridine), mediated by the elongator complex. The cytochrome b5/NADH cytochrome b5 reductase electron transfer system supports the catalytic activity of several sterol biosynthetic enzymes. The chain is NADH-cytochrome b5 reductase 1 (CBR1) from Pyricularia oryzae (strain 70-15 / ATCC MYA-4617 / FGSC 8958) (Rice blast fungus).